Reading from the N-terminus, the 300-residue chain is Quinolinate synthase (300 aa).

Positions 23 and 40 each coordinate iminosuccinate. Cys-85 contacts [4Fe-4S] cluster. Iminosuccinate-binding positions include 111–113 and Ser-128; that span reads YIN. [4Fe-4S] cluster is bound at residue Cys-171. Residues 198–200 and Thr-215 each bind iminosuccinate; that span reads HPE. Residue Cys-258 coordinates [4Fe-4S] cluster.

This sequence belongs to the quinolinate synthase family. Type 2 subfamily. [4Fe-4S] cluster is required as a cofactor.

The protein localises to the cytoplasm. The enzyme catalyses iminosuccinate + dihydroxyacetone phosphate = quinolinate + phosphate + 2 H2O + H(+). Its pathway is cofactor biosynthesis; NAD(+) biosynthesis; quinolinate from iminoaspartate: step 1/1. In terms of biological role, catalyzes the condensation of iminoaspartate with dihydroxyacetone phosphate to form quinolinate. This Clostridium novyi (strain NT) protein is Quinolinate synthase.